A 569-amino-acid chain; its full sequence is Protein THEMIS3 (569 aa).

CABIT regions lie at residues 1–254 (MEQT…ARLD) and 255–523 (RKPR…EERS).

It belongs to the themis family. In terms of tissue distribution, specifically expressed in the intestine.

This chain is Protein THEMIS3 (Themis3), found in Mus musculus (Mouse).